We begin with the raw amino-acid sequence, 252 residues long: uncharacterized protein (252 aa).

It is found in the plastid. It localises to the chloroplast. This is an uncharacterized protein from Guillardia theta (Cryptophyte).